Here is a 257-residue protein sequence, read N- to C-terminus: Imidazole glycerol phosphate synthase subunit HisF (257 aa).

Catalysis depends on residues aspartate 11 and aspartate 130.

Belongs to the HisA/HisF family. In terms of assembly, heterodimer of HisH and HisF.

It localises to the cytoplasm. The enzyme catalyses 5-[(5-phospho-1-deoxy-D-ribulos-1-ylimino)methylamino]-1-(5-phospho-beta-D-ribosyl)imidazole-4-carboxamide + L-glutamine = D-erythro-1-(imidazol-4-yl)glycerol 3-phosphate + 5-amino-1-(5-phospho-beta-D-ribosyl)imidazole-4-carboxamide + L-glutamate + H(+). The protein operates within amino-acid biosynthesis; L-histidine biosynthesis; L-histidine from 5-phospho-alpha-D-ribose 1-diphosphate: step 5/9. Functionally, IGPS catalyzes the conversion of PRFAR and glutamine to IGP, AICAR and glutamate. The HisF subunit catalyzes the cyclization activity that produces IGP and AICAR from PRFAR using the ammonia provided by the HisH subunit. This is Imidazole glycerol phosphate synthase subunit HisF from Shewanella sediminis (strain HAW-EB3).